The following is a 1209-amino-acid chain: MESAPKTVSLPVSPLGYVYARQKASLQTGTVSLTAARSVDSDLAVLPVIRGLTVEQTFTTNVAVVAGSKTTGLGGTGITLKLTPSHFNPNAFVFYGGSVIGASSNAPNLTRACEAARRRFGFSAFSSPPVENAVETSGEEICASLNLSPETTALYLVVTESFKEMVYVCNTFLHYGGTSTVTIDGQDAMKIPIYPVQLYMPDVNRLASEPFNAKHRSIGDEFVYSRPFFNSDLCRLLHGYVLGPAAVALRVRNLDGVARGAAHLALDENHEGSVLPQDVTFTLFDSTQGNAGKGSGRAQRQGDGSGSKNSASSGIERRLASVMAADTALSVDSIMGAGIYDTELPSVEDWPVLSSGDDTESLEALGAYAARLSGLVGAMVFSANSVLYMTEVDDGGPADGKDGSNPSYHRFYLIAAPYVAGNPQTDKDGRVLPHTADQQAAPINGSNQEFSLDYLALACGFCPQILARLLFYLERCDAGTFGGRNETDALRYLANTLESDVPCGLCNQATRPACAHTTLHRLRQRLPRFGAPVRAPIGIFGTMNSAYSDCDVLGNYASYGALKRPNDNEAPKSIMQDTYRATMERLVNELEQAKLIDKETLAQASPCSAPTSVVHDQASFIGLLSNIKDTIEGAAEQFMRTLVEARDFKIREGLADANHTMSISLDPYSSSFCPVTSFLARRTVFAVLQDLVLSQCHCLFYGQSVEGRNFRNQFQPVLRRRFLDMLNGGFITAKTVTVTVSDSGVLAPDLTRPASEPPTKDYDGDMARVSMEVLRDLRVKNRVLFSNGGANMSEAARARVAGMASAYRRPDKGSNILNGAVGFLVKQYHGVLFPRGHPPGIDTPNPQWFWTLLQRNQMPARLLSKEDIETITAIKRFSDEYSAINFINLTPNNIGELAQFYFANLVLKYCDHSQYFINGLTAIVVGSRRPRDPAAVLAWIDRTINGAADVEPAAQEVLQRLGSNPAAWTGTFTSTNMVRYVMDQRPMVVIGLSISKYNGSAGNNRVFQAGNWNGLNGGKNVCPLMAFDRTRRFVLACPRVGFTCEAGGFGTGVRENTLSEQVRGIVSEGGPMVQTAVFAAVLHALGARTQHLAVDDWIGLVDDEFLAASLDALNATVVDQFGEWSVEAAQELVKNMEAQTTAGAVAAGEGAFDFGACVGDTPQQSTSAFNGGLAMAAAPAGQKRSLPDDILFDMGAPPEKKSGLTFDML.

The tract at residues 290–312 (NAGKGSGRAQRQGDGSGSKNSAS) is disordered. A zinc finger spans residues 503–516 (CGLCNQATRPACAH). A Required for filament formation motif is present at residues 849 to 850 (FW). The required for nuclear localization stretch occupies residues 1182 to 1209 (QKRSLPDDILFDMGAPPEKKSGLTFDML).

This sequence belongs to the herpesviridae major DNA-binding protein family. In terms of assembly, homooligomers. Forms double-helical filaments necessary for the formation of replication compartments within the host nucleus. Interacts with the origin-binding protein. Interacts with the helicase primase complex; this interaction stimulates primer synthesis activity of the helicase-primase complex. Interacts with the DNA polymerase. Interacts with the alkaline exonuclease; this interaction increases its nuclease processivity.

Its subcellular location is the host nucleus. Its function is as follows. Plays several crucial roles in viral infection. Participates in the opening of the viral DNA origin to initiate replication by interacting with the origin-binding protein. May disrupt loops, hairpins and other secondary structures present on ssDNA to reduce and eliminate pausing of viral DNA polymerase at specific sites during elongation. Promotes viral DNA recombination by performing strand-transfer, characterized by the ability to transfer a DNA strand from a linear duplex to a complementary single-stranded DNA circle. Can also catalyze the renaturation of complementary single strands. Additionally, reorganizes the host cell nucleus, leading to the formation of prereplicative sites and replication compartments. This process is driven by the protein which can form double-helical filaments in the absence of DNA. The protein is Major DNA-binding protein of Equine herpesvirus 1 (strain Ab4p) (EHV-1).